A 264-amino-acid polypeptide reads, in one-letter code: Thymidylate synthase (264 aa).

R21 provides a ligand contact to dUMP. H51 is a (6R)-5,10-methylene-5,6,7,8-tetrahydrofolate binding site. Position 126–127 (126–127 (RR)) interacts with dUMP. C146 acts as the Nucleophile in catalysis. DUMP contacts are provided by residues 166–169 (RSCD), N177, and 207–209 (HLY). Residue D169 coordinates (6R)-5,10-methylene-5,6,7,8-tetrahydrofolate. Residue A263 participates in (6R)-5,10-methylene-5,6,7,8-tetrahydrofolate binding.

The protein belongs to the thymidylate synthase family. Bacterial-type ThyA subfamily. As to quaternary structure, homodimer.

The protein localises to the cytoplasm. The catalysed reaction is dUMP + (6R)-5,10-methylene-5,6,7,8-tetrahydrofolate = 7,8-dihydrofolate + dTMP. Its pathway is pyrimidine metabolism; dTTP biosynthesis. Functionally, catalyzes the reductive methylation of 2'-deoxyuridine-5'-monophosphate (dUMP) to 2'-deoxythymidine-5'-monophosphate (dTMP) while utilizing 5,10-methylenetetrahydrofolate (mTHF) as the methyl donor and reductant in the reaction, yielding dihydrofolate (DHF) as a by-product. This enzymatic reaction provides an intracellular de novo source of dTMP, an essential precursor for DNA biosynthesis. This Salmonella typhimurium (strain LT2 / SGSC1412 / ATCC 700720) protein is Thymidylate synthase.